Here is a 150-residue protein sequence, read N- to C-terminus: Large ribosomal subunit protein bL9 (150 aa).

This sequence belongs to the bacterial ribosomal protein bL9 family.

In terms of biological role, binds to the 23S rRNA. The polypeptide is Large ribosomal subunit protein bL9 (Alkalilimnicola ehrlichii (strain ATCC BAA-1101 / DSM 17681 / MLHE-1)).